The sequence spans 319 residues: Beta-ketoacyl-[acyl-carrier-protein] synthase III (319 aa).

Active-site residues include Cys-113 and His-246. The interval 247 to 251 (QANIR) is ACP-binding. Residue Asn-276 is part of the active site.

Belongs to the thiolase-like superfamily. FabH family. In terms of assembly, homodimer.

The protein localises to the cytoplasm. It carries out the reaction malonyl-[ACP] + acetyl-CoA + H(+) = 3-oxobutanoyl-[ACP] + CO2 + CoA. The protein operates within lipid metabolism; fatty acid biosynthesis. Catalyzes the condensation reaction of fatty acid synthesis by the addition to an acyl acceptor of two carbons from malonyl-ACP. Catalyzes the first condensation reaction which initiates fatty acid synthesis and may therefore play a role in governing the total rate of fatty acid production. Possesses both acetoacetyl-ACP synthase and acetyl transacylase activities. Its substrate specificity determines the biosynthesis of branched-chain and/or straight-chain of fatty acids. The protein is Beta-ketoacyl-[acyl-carrier-protein] synthase III of Ehrlichia chaffeensis (strain ATCC CRL-10679 / Arkansas).